Here is a 292-residue protein sequence, read N- to C-terminus: NAD kinase (292 aa).

The active-site Proton acceptor is the aspartate 73. NAD(+)-binding positions include 73 to 74 (DG), 147 to 148 (NE), histidine 158, arginine 175, aspartate 177, 188 to 193 (TAYSLS), and glutamine 247.

The protein belongs to the NAD kinase family. A divalent metal cation serves as cofactor.

Its subcellular location is the cytoplasm. The catalysed reaction is NAD(+) + ATP = ADP + NADP(+) + H(+). Involved in the regulation of the intracellular balance of NAD and NADP, and is a key enzyme in the biosynthesis of NADP. Catalyzes specifically the phosphorylation on 2'-hydroxyl of the adenosine moiety of NAD to yield NADP. In Erwinia tasmaniensis (strain DSM 17950 / CFBP 7177 / CIP 109463 / NCPPB 4357 / Et1/99), this protein is NAD kinase.